A 208-amino-acid chain; its full sequence is Probable DNA-3-methyladenine glycosylase (208 aa).

This sequence belongs to the DNA glycosylase MPG family.

It is found in the nucleus. It catalyses the reaction Hydrolysis of alkylated DNA, releasing 3-methyladenine, 3-methylguanine, 7-methylguanine and 7-methyladenine.. In terms of biological role, hydrolysis of the deoxyribose N-glycosidic bond to excise 3-methyladenine, and 7-methylguanine from the damaged DNA polymer formed by alkylation lesions. In Encephalitozoon cuniculi (strain GB-M1) (Microsporidian parasite), this protein is Probable DNA-3-methyladenine glycosylase.